The primary structure comprises 497 residues: Reticulophagy regulator 1 (497 aa).

Residues 1–51 (MASPAPPEHAEEGCPAPAAEEQAPPSPPPPQASPAERQQQEEEAQEAGAAE) are disordered. The Cytoplasmic segment spans residues 1 to 59 (MASPAPPEHAEEGCPAPAAEEQAPPSPPPPQASPAERQQQEEEAQEAGAAEGAGLQVEE). Positions 13–23 (GCPAPAAEEQA) are enriched in low complexity. Residues 60–80 (AAGRAAAAVTWLLGEPVLWLG) form a helical membrane-spanning segment. Over 81-95 (CRADELLSWKRPLRS) the chain is Lumenal. The segment at 84–233 (DELLSWKRPL…LLCAFLCPLF (150 aa)) is reticulon homology domain. The helical transmembrane segment at 96–116 (LLGFVAANLLFWFLALTPWRV) threads the bilayer. The Cytoplasmic portion of the chain corresponds to 117-118 (YH). The helical transmembrane segment at 119-139 (LISVMILGRVIMQIIKDMVLS) threads the bilayer. The Lumenal segment spans residues 140–208 (RTRGAQLWRS…LVCSVCTFFT (69 aa)). Ser-149 is modified (phosphoserine). Ser-151 carries the phosphoserine; by CAMK2B modification. Ser-153 is modified (phosphoserine). The chain crosses the membrane as a helical span at residues 209–229 (ILGSYIPGVILSYLLLLCAFL). The Cytoplasmic segment spans residues 230–497 (CPLFKCNDIG…GFLSNLLGGH (268 aa)). The span at 319-330 (FNLSEGYTPQTD) shows a compositional bias: polar residues. 4 disordered regions span residues 319–365 (FNLS…EDEL), 377–396 (KEQLDSGHRPSKETQSAAGL), 436–455 (LSQAAPIPEEDTDTEEGDDF), and 468–497 (SELGLTQDQEAEAQQNKKSSGFLSNLLGGH). Basic and acidic residues-rich tracts occupy residues 334–348 (DLDRPSEEVFSRDLS) and 377–388 (KEQLDSGHRPSK). Over residues 443–455 (PEEDTDTEEGDDF) the composition is skewed to acidic residues. Residues 453–458 (DDFELL) carry the LIR motif motif. The segment covering 471-490 (GLTQDQEAEAQQNKKSSGFL) has biased composition (polar residues).

The protein belongs to the RETREG family. In terms of assembly, homooligomer; oligomerization is enhanced following endoplasmic reticulum stress and is mediated by the reticulon homology domain. Interacts with ATG8 family modifier proteins MAP1LC3A, MAP1LC3B, MAP1LC3C, GABARAP, GABARAPL1 and GABARAPL2. Shows higher affinity for GABARAPL1 than for MAP1LC3A or MAP1LC3B. Post-translationally, phosphorylation at Ser-151 by CAMK2B enhances oligomerization and membrane scission and reticulophagy activity. In terms of tissue distribution, overexpressed in esophageal squamous cell carcinoma.

It is found in the golgi apparatus. The protein localises to the cis-Golgi network membrane. It localises to the endoplasmic reticulum membrane. Endoplasmic reticulum (ER)-anchored autophagy regulator which mediates ER delivery into lysosomes through sequestration into autophagosomes. Promotes membrane remodeling and ER scission via its membrane bending capacity and targets the fragments into autophagosomes via interaction with ATG8 family proteins. Active under basal conditions. Required for collagen quality control in a LIR motif-dependent manner. Required for long-term survival of nociceptive and autonomic ganglion neurons. In terms of biological role, (Microbial infection) During SARS-CoV-2 infection, RETREG1-mediated reticulophagy is promoted by SARS-CoV-2 ORF3A protein. This induces endoplasmic reticulum stress and inflammatory responses and facilitates viral infection. The protein is Reticulophagy regulator 1 of Homo sapiens (Human).